The chain runs to 567 residues: Ribulokinase (567 aa).

Belongs to the ribulokinase family.

The catalysed reaction is D-ribulose + ATP = D-ribulose 5-phosphate + ADP + H(+). It carries out the reaction L-ribulose + ATP = L-ribulose 5-phosphate + ADP + H(+). Its pathway is carbohydrate degradation; L-arabinose degradation via L-ribulose; D-xylulose 5-phosphate from L-arabinose (bacterial route): step 2/3. This Vibrio parahaemolyticus serotype O3:K6 (strain RIMD 2210633) protein is Ribulokinase.